Consider the following 418-residue polypeptide: eIF5-mimic protein 2-B (418 aa).

Residues 1–15 (MSYQKQQKPTLTGQR) are compositionally biased toward polar residues. The segment at 1–29 (MSYQKQQKPTLTGQRFKTRKRDEKERFDP) is disordered. The W2 domain maps to 247–414 (NQQSLGARKE…KNAEEESESE (168 aa)).

Belongs to the BZW family.

In terms of biological role, translation initiation regulator which may repress repeat-associated non-AUG (RAN) initiated translation probably by acting as a competitive inhibitor of eukaryotic translation initiation factor 5 (EIF5) function. Enhances histone H4 gene transcription but does not seem to bind DNA directly. The chain is eIF5-mimic protein 2-B (bzw1b) from Danio rerio (Zebrafish).